A 204-amino-acid chain; its full sequence is Histone chaperone ASF1A (204 aa).

Residues 1–156 are interaction with histone H3, CHAF1B, and HIRA; that stretch reads MAKVQVNNVV…TRFHINWEDN (156 aa). Residues 31 to 37 carry the Required for interaction with HIRA motif; it reads IEDLSED. The required for interaction with HIRA stretch occupies residues 155-204; the sequence is DNTEKLEDAESSNPNLPSLLSTDALPSASKGWSTSENSLNVMLESHMDCM. Serine 192 is subject to Phosphoserine; by TLK2.

The protein belongs to the ASF1 family. As to quaternary structure, interacts with histone H3 (via C-terminus), including histone H3.1, H3.2 and H3.3, and histone H4; the interaction with H3 is direct. Probably interacts with the heterodimeric form of H3-H4 taking the place of the second dimer. Interacts with the CHAF1A, CHAF1B and RBBP4 subunits of the CAF-1 complex. Interacts with CABIN1, HAT1, HIRA, NASP, TAF1 and UBN1. Found in a soluble complex with NASP and histones H3 and H4; the interaction with NASP is probably indirect and mediated by H3-H4. Interacts with CDAN1. Found in a cytosolic complex with IPO4 and histones H3 and H4. Interacts with CREBBP. In terms of processing, phosphorylated by TLK1 and TLK2. Highly phosphorylated in S-phase and at lower levels in M-phase. TLK2-mediated phosphorylation at Ser-192 prevents proteasome-dependent degradation.

It localises to the nucleus. Its function is as follows. Histone chaperone that facilitates histone deposition and histone exchange and removal during nucleosome assembly and disassembly. Cooperates with chromatin assembly factor 1 (CAF-1) to promote replication-dependent chromatin assembly and with HIRA to promote replication-independent chromatin assembly. Promotes homologous recombination-mediated repair of double-strand breaks (DSBs) at stalled or collapsed replication forks: acts by mediating histone replacement at DSBs, leading to recruitment of the MMS22L-TONSL complex and subsequent loading of RAD51. Also involved in the nuclear import of the histone H3-H4 dimer together with importin-4 (IPO4): specifically recognizes and binds newly synthesized histones with the monomethylation of H3 'Lys-9' and acetylation at 'Lys-14' (H3K9me1K14ac) marks, and diacetylation at 'Lys-5' and 'Lys-12' of H4 (H4K5K12ac) marks in the cytosol. Required for the formation of senescence-associated heterochromatin foci (SAHF) and efficient senescence-associated cell cycle exit. This chain is Histone chaperone ASF1A (ASF1A), found in Bos taurus (Bovine).